Consider the following 149-residue polypeptide: D-aminoacyl-tRNA deacylase (149 aa).

A Gly-cisPro motif, important for rejection of L-amino acids motif is present at residues 137 to 138 (GP).

This sequence belongs to the DTD family. In terms of assembly, homodimer.

The protein localises to the cytoplasm. The catalysed reaction is glycyl-tRNA(Ala) + H2O = tRNA(Ala) + glycine + H(+). The enzyme catalyses a D-aminoacyl-tRNA + H2O = a tRNA + a D-alpha-amino acid + H(+). Functionally, an aminoacyl-tRNA editing enzyme that deacylates mischarged D-aminoacyl-tRNAs. Also deacylates mischarged glycyl-tRNA(Ala), protecting cells against glycine mischarging by AlaRS. Acts via tRNA-based rather than protein-based catalysis; rejects L-amino acids rather than detecting D-amino acids in the active site. By recycling D-aminoacyl-tRNA to D-amino acids and free tRNA molecules, this enzyme counteracts the toxicity associated with the formation of D-aminoacyl-tRNA entities in vivo and helps enforce protein L-homochirality. The chain is D-aminoacyl-tRNA deacylase from Clostridium botulinum (strain Kyoto / Type A2).